We begin with the raw amino-acid sequence, 426 residues long: DNA primase DnaG (426 aa).

Residues aspartate 171–proline 245 form the Toprim domain. The Mg(2+) site is built by glutamate 177, aspartate 219, and aspartate 221. The tract at residues lysine 407–proline 426 is disordered. The span at glutamine 413–proline 426 shows a compositional bias: polar residues.

This sequence belongs to the archaeal DnaG primase family. Forms a ternary complex with MCM helicase and DNA. Component of the archaeal exosome complex. It depends on Mg(2+) as a cofactor.

It catalyses the reaction ssDNA + n NTP = ssDNA/pppN(pN)n-1 hybrid + (n-1) diphosphate.. Its function is as follows. RNA polymerase that catalyzes the synthesis of short RNA molecules used as primers for DNA polymerase during DNA replication. Also part of the exosome, which is a complex involved in RNA degradation. Acts as a poly(A)-binding protein that enhances the interaction between heteromeric, adenine-rich transcripts and the exosome. The sequence is that of DNA primase DnaG from Thermofilum pendens (strain DSM 2475 / Hrk 5).